Here is a 661-residue protein sequence, read N- to C-terminus: Phospholipid:diacylglycerol acyltransferase (661 aa).

The segment at methionine 1–arginine 71 is disordered. Residues methionine 1–leucine 80 are Cytoplasmic-facing. Residues histidine 34–glycine 48 are compositionally biased toward basic residues. 2 consecutive short sequence motifs (bipartite nuclear localization signal) follow at residues histidine 43–serine 50 and arginine 64–arginine 71. Over residues lysine 54–glycine 70 the composition is skewed to basic and acidic residues. A helical transmembrane segment spans residues isoleucine 81–valine 101. Topologically, residues histidine 102–methionine 661 are lumenal. Substrate is bound at residue glutamine 162. Positions glycine 322–glycine 326 match the GHSXG lipase motif motif. Serine 324 (acyl-ester intermediate) is an active-site residue. Methionine 325 contacts substrate. Asparagine 453, asparagine 461, and asparagine 469 each carry an N-linked (GlcNAc...) asparagine glycan. Aspartate 567 serves as the catalytic Charge relay system. An N-linked (GlcNAc...) asparagine glycan is attached at asparagine 594. Histidine 618 (charge relay system) is an active-site residue.

The protein belongs to the AB hydrolase superfamily. Lipase family.

It is found in the endoplasmic reticulum membrane. It localises to the nucleus inner membrane. It catalyses the reaction a glycerophospholipid + a 1,2-diacyl-sn-glycerol = a monoacylglycerophospholipid + a triacyl-sn-glycerol. The enzyme catalyses a 1-acyl-sn-glycerol + a 1,2-diacyl-sn-glycero-3-phosphocholine = a 1-acyl-sn-glycero-3-phosphocholine + a 1,2-diacyl-sn-glycerol. The catalysed reaction is 1,2-di-(9Z-octadecenoyl)-sn-glycero-3-phosphoethanolamine + 1,2-di-(9Z-octadecenoyl)-sn-glycerol = 1-(9Z-octadecenoyl)-sn-glycero-3-phosphoethanolamine + 1,2,3-tri-(9Z-octadecenoyl)-glycerol. It carries out the reaction 1,2-di-(9Z-octadecenoyl)-sn-glycerol + 1,2-di-(9Z-octadecenoyl)-sn-glycero-3-phosphocholine = 1,2,3-tri-(9Z-octadecenoyl)-glycerol + 1-(9Z-octadecenoyl)-sn-glycero-3-phosphocholine. It catalyses the reaction 1-(9Z-octadecenoyl)-sn-glycerol + 1,2-di-(9Z-octadecenoyl)-sn-glycero-3-phosphocholine = di-(9Z)-octadecenoylglycerol + 1-(9Z-octadecenoyl)-sn-glycero-3-phosphocholine. The enzyme catalyses 2-(9Z-octadecenoyl)-glycerol + 1,2-di-(9Z-octadecenoyl)-sn-glycero-3-phosphocholine = 1,2-di-(9Z-octadecenoyl)-glycerol + 1-(9Z-octadecenoyl)-sn-glycero-3-phosphocholine. The catalysed reaction is 1-(9Z-octadecenoyl)-2-hexadecanoyl-sn-glycero-3-phosphoethanolamine + 1,2-di-(9Z-octadecenoyl)-sn-glycerol = 1,2-di-(9Z)-octadecenoyl-3-hexadecanoyl-sn-glycerol + 1-(9Z-octadecenoyl)-sn-glycero-3-phosphoethanolamine. It carries out the reaction 1-(9Z-octadecenoyl)-2-octadecanoyl-sn-glycero-3-phosphoethanolamine + 1,2-di-(9Z-octadecenoyl)-sn-glycerol = 1,2-di-(9Z)-octadecenoyl-3-octadecanoyl-sn-glycerol + 1-(9Z-octadecenoyl)-sn-glycero-3-phosphoethanolamine. It catalyses the reaction 1-(9Z)-octadecenoyl-2-(9Z,12Z)-octadecadienoyl-sn-glycero-3-phosphoethanolamine + 1,2-di-(9Z-octadecenoyl)-sn-glycerol = 1,2-di-(9Z)-octadecenoyl-3-(9Z,12Z)-octadecadienoyl-sn-glycerol + 1-(9Z-octadecenoyl)-sn-glycero-3-phosphoethanolamine. In terms of biological role, catalyzes triacylglycerol (TAG) formation by an acyl-CoA independent pathway. The enzyme specifically transfers acyl groups from the sn-2 position of a phospholipid to diacylglycerol (DAG), thus forming an sn-1-lysophospholipid. The preferred acyl donors are phosphatidylethanolamine (PE) and phosphatidylcholine (PC). Also capable of using broad acyl donors such as phosphatidic acid (PA), phosphatidylserine (PS), phosphatidylglycerol (PG) and phosphatidylinositol (PI), as well as monogalactosyldiacylglycerol (MGDG), digalactosyldiacylglycerol (DGDG), and acyl-CoA, and it is more likely to use unsaturated acyl donors. As acyl acceptors, it prefers 1,2- over 1,3-diacylglycerol (DAG). Additionally, has esterification activity that can utilize methanol as acyl acceptor to generate fatty acid methyl esters (FAME). Can also utilize ceramide instead of DAG, acylating the ceramides by attaching a fatty acid to the hydroxy group on the first carbon atom of the long-chain base to produce 1-O-acylceramides. Involved in lipid particle synthesis from the endoplasmic reticulum, promoting localized TAG production at discrete ER subdomains. Relocates from the endoplasmic reticulum to a subdomain of the inner nuclear membrane upon nutrient starvation, where it provides a site of TAG synthesis, which is coupled with nuclear membrane remodeling. This is Phospholipid:diacylglycerol acyltransferase from Saccharomyces cerevisiae (strain ATCC 204508 / S288c) (Baker's yeast).